Reading from the N-terminus, the 891-residue chain is Alanine--tRNA ligase (891 aa).

Zn(2+)-binding residues include H564, H568, C678, and H682.

Belongs to the class-II aminoacyl-tRNA synthetase family. The cofactor is Zn(2+).

The protein localises to the cytoplasm. It catalyses the reaction tRNA(Ala) + L-alanine + ATP = L-alanyl-tRNA(Ala) + AMP + diphosphate. Functionally, catalyzes the attachment of alanine to tRNA(Ala) in a two-step reaction: alanine is first activated by ATP to form Ala-AMP and then transferred to the acceptor end of tRNA(Ala). Also edits incorrectly charged Ser-tRNA(Ala) and Gly-tRNA(Ala) via its editing domain. The protein is Alanine--tRNA ligase of Nitrobacter hamburgensis (strain DSM 10229 / NCIMB 13809 / X14).